A 702-amino-acid polypeptide reads, in one-letter code: Heparin-sulfate lyase (702 aa).

Positions 1-17 (MKNIFFICFCALFAFSG) are cleaved as a signal peptide. Tyr-314 functions as the Proton acceptor in the catalytic mechanism.

The protein belongs to the polysaccharide lyase 12 family.

Its subcellular location is the periplasm. It catalyses the reaction Elimination of sulfate, appears to act on linkages between N-acetyl-D-glucosamine and uronate. Product is an unsaturated sugar.. In terms of biological role, specifically cleaves heparan sulfate-rich regions of acidic polysaccharides. Does not act on N,O-desulfated glucosamine or N-acetyl-O-sulfated glucosamine linkages. Functions in cleaving metazoan heparan sulfate and providing carbon, nitrogen and sulfate sources for microorganisms. The protein is Heparin-sulfate lyase (hepC) of Bacteroides thetaiotaomicron (strain ATCC 29148 / DSM 2079 / JCM 5827 / CCUG 10774 / NCTC 10582 / VPI-5482 / E50).